A 343-amino-acid chain; its full sequence is MSILSPLIIRLCNPRGFCAGVDRAIQIVLLALKKYGAPVYVRHEIVHNRYVVEGLQQRGAIFVEELDEIPEEHRNQPVVFSAHGVPKSVPEQADCYNLFYLDATCPLVSKVHKQAMRHQRHRRHVILIGHAGHPEVIGTMGQLEKGGVTLIETVEDALHYQPDDPDNLGFVTQTTLSVEDTAEILDVLQRRFPALEPPAAESICYATTNRQNAVKAAALGSDLFLIVGAPNSSNSRRLVEVAERSGARQSILVQRADEIDFDHLGALSVVSLSAGASAPEIIVDEIISAFRKRYNVTIELAETVVENETFLVNRELRDVVLTPQDMAFMNGRSEMLKNKNQDM.

Cys18 contributes to the [4Fe-4S] cluster binding site. The (2E)-4-hydroxy-3-methylbut-2-enyl diphosphate site is built by His47 and His83. Positions 47 and 83 each coordinate dimethylallyl diphosphate. Positions 47 and 83 each coordinate isopentenyl diphosphate. Cys105 serves as a coordination point for [4Fe-4S] cluster. A (2E)-4-hydroxy-3-methylbut-2-enyl diphosphate-binding site is contributed by His133. Dimethylallyl diphosphate is bound at residue His133. His133 contacts isopentenyl diphosphate. Residue Glu135 is the Proton donor of the active site. Thr174 provides a ligand contact to (2E)-4-hydroxy-3-methylbut-2-enyl diphosphate. Cys204 contacts [4Fe-4S] cluster. Residues Ser232, Ser233, Asn234, and Ser277 each coordinate (2E)-4-hydroxy-3-methylbut-2-enyl diphosphate. Dimethylallyl diphosphate-binding residues include Ser232, Ser233, Asn234, and Ser277. Ser232, Ser233, Asn234, and Ser277 together coordinate isopentenyl diphosphate.

The protein belongs to the IspH family. Requires [4Fe-4S] cluster as cofactor.

It carries out the reaction isopentenyl diphosphate + 2 oxidized [2Fe-2S]-[ferredoxin] + H2O = (2E)-4-hydroxy-3-methylbut-2-enyl diphosphate + 2 reduced [2Fe-2S]-[ferredoxin] + 2 H(+). It catalyses the reaction dimethylallyl diphosphate + 2 oxidized [2Fe-2S]-[ferredoxin] + H2O = (2E)-4-hydroxy-3-methylbut-2-enyl diphosphate + 2 reduced [2Fe-2S]-[ferredoxin] + 2 H(+). It functions in the pathway isoprenoid biosynthesis; dimethylallyl diphosphate biosynthesis; dimethylallyl diphosphate from (2E)-4-hydroxy-3-methylbutenyl diphosphate: step 1/1. It participates in isoprenoid biosynthesis; isopentenyl diphosphate biosynthesis via DXP pathway; isopentenyl diphosphate from 1-deoxy-D-xylulose 5-phosphate: step 6/6. Functionally, catalyzes the conversion of 1-hydroxy-2-methyl-2-(E)-butenyl 4-diphosphate (HMBPP) into a mixture of isopentenyl diphosphate (IPP) and dimethylallyl diphosphate (DMAPP). Acts in the terminal step of the DOXP/MEP pathway for isoprenoid precursor biosynthesis. This is 4-hydroxy-3-methylbut-2-enyl diphosphate reductase from Bartonella henselae (strain ATCC 49882 / DSM 28221 / CCUG 30454 / Houston 1) (Rochalimaea henselae).